A 359-amino-acid polypeptide reads, in one-letter code: 3-dehydroquinate synthase (359 aa).

NAD(+)-binding positions include Asp69 to Lys74, Gly103 to Asp107, Thr127 to Thr128, Lys140, Lys149, and Thr167 to Thr170. Residues Glu182, His245, and His262 each coordinate Zn(2+).

Belongs to the sugar phosphate cyclases superfamily. Dehydroquinate synthase family. It depends on Co(2+) as a cofactor. Zn(2+) is required as a cofactor. The cofactor is NAD(+).

It is found in the cytoplasm. The enzyme catalyses 7-phospho-2-dehydro-3-deoxy-D-arabino-heptonate = 3-dehydroquinate + phosphate. Its pathway is metabolic intermediate biosynthesis; chorismate biosynthesis; chorismate from D-erythrose 4-phosphate and phosphoenolpyruvate: step 2/7. In terms of biological role, catalyzes the conversion of 3-deoxy-D-arabino-heptulosonate 7-phosphate (DAHP) to dehydroquinate (DHQ). The chain is 3-dehydroquinate synthase from Nitrosococcus oceani (strain ATCC 19707 / BCRC 17464 / JCM 30415 / NCIMB 11848 / C-107).